The sequence spans 1434 residues: Inositol hexakisphosphate and diphosphoinositol-pentakisphosphate kinase 1 (1434 aa).

Substrate is bound at residue 66–67 (KK). ATP contacts are provided by residues arginine 147, lysine 200, histidine 207, arginine 226, 250–253 (EEFM), and 259–261 (DVK). Position 226–227 (226–227 (RK)) interacts with substrate. Substrate contacts are provided by lysine 261 and arginine 275. ATP is bound by residues serine 277, aspartate 322, and 334 to 336 (DVN). 339–342 (SFVK) is a binding site for substrate. Residues 384-455 (PTTSGTMMEL…VLDITRLLLA (72 aa)) form a polyphosphoinositide-binding domain region. The tract at residues 916 to 1017 (EGSAPAGCGF…PTEMKQSGLG (102 aa)) is disordered. Phosphoserine occurs at positions 941 and 984. Over residues 1002–1017 (FSSSRPPTEMKQSGLG) the composition is skewed to polar residues. A phosphoserine mark is found at serine 1034, serine 1070, serine 1142, and serine 1149. Disordered stretches follow at residues 1133–1193 (NHQA…GFSD), 1228–1251 (ESTQ…DTEV), and 1396–1434 (TDNP…EDIS). The segment covering 1165–1183 (SSGPSSTVSSAGPSSPTTV) has biased composition (low complexity). Over residues 1403 to 1434 (LSEETDLQAQEVSEEIDQEPEVVDELSNEDIS) the composition is skewed to acidic residues.

The protein belongs to the histidine acid phosphatase family. VIP1 subfamily.

It localises to the cytoplasm. The protein resides in the cytosol. It is found in the cell membrane. It catalyses the reaction 1D-myo-inositol hexakisphosphate + ATP = 1-diphospho-1D-myo-inositol 2,3,4,5,6-pentakisphosphate + ADP. The enzyme catalyses 5-diphospho-1D-myo-inositol 1,2,3,4,6-pentakisphosphate + ATP + H(+) = 1,5-bis(diphospho)-1D-myo-inositol 2,3,4,6-tetrakisphosphate + ADP. In terms of biological role, bifunctional inositol kinase that acts in concert with the IP6K kinases IP6K1, IP6K2 and IP6K3 to synthesize the diphosphate group-containing inositol pyrophosphates diphosphoinositol pentakisphosphate, PP-InsP5, and bis-diphosphoinositol tetrakisphosphate, (PP)2-InsP4. PP-InsP5 and (PP)2-InsP4, also respectively called InsP7 and InsP8, regulate a variety of cellular processes, including apoptosis, vesicle trafficking, cytoskeletal dynamics, exocytosis, insulin signaling and neutrophil activation. Phosphorylates inositol hexakisphosphate (InsP6) at position 1 to produce PP-InsP5 which is in turn phosphorylated by IP6Ks to produce (PP)2-InsP4. Alternatively, phosphorylates PP-InsP5 at position 1, produced by IP6Ks from InsP6, to produce (PP)2-InsP4. Activated when cells are exposed to hyperosmotic stress. This chain is Inositol hexakisphosphate and diphosphoinositol-pentakisphosphate kinase 1, found in Rattus norvegicus (Rat).